A 503-amino-acid polypeptide reads, in one-letter code: LEM domain-containing protein 2 (503 aa).

An N-acetylalanine modification is found at alanine 2. One can recognise an LEM domain in the interval 2-42 (AGLSDLELRRELQALGFQPGPITDTTRDVYRNKLRRLRGEA). Positions 42 to 74 (ARLRDEERLREEARPRGEERLREEARLREDAPL) are enriched in basic and acidic residues. 2 disordered regions span residues 42 to 97 (ARLR…SGSA) and 127 to 157 (AQLRRRASVRGSSEEDEDARTPDRATQGPGL). Positions 74–130 (LRARPAAASPRAEPWLSQPASGSAYATPGAYGDIRPSAASWVGSRGLAYPARPAQLR) are required for nuclear retention and interaction with LMNA isoform C. Over residues 75–87 (RARPAAASPRAEP) the composition is skewed to low complexity. Serine 166 and serine 175 each carry phosphoserine. Residues 172–198 (LPSSLLGPDPRPGLRATRAGPAGAARA) are disordered. Positions 184–197 (GLRATRAGPAGAAR) are enriched in low complexity. Helical transmembrane passes span 213 to 233 (LLLWASLGLLLVFLGILWVKM) and 377 to 397 (VTNVLIFFWCLAFLWGLLILL). The segment at 395–503 (ILLKYRWRKL…KPSSFSDSER (109 aa)) is winged-Helix (WH). Phosphoserine occurs at positions 497, 499, and 501.

As to quaternary structure, interacts (via N-terminus) with LMNA isoform C (via C-terminus) (in vitro). Interacts (via LEM domain) with BANF1. Interacts (via C-terminus) with CHMP7. Interacts (via N-terminus) with tubulin; the interaction causes microtubule bundling and stabilization (in vitro). Phosphorylated; strongly phosphorylated in mitosis compared to G1/S. As to expression, ubiquitously expressed, including bone marrow, brain, kidney, colon, skeletal muscle, thymus, testis and uterus.

Its subcellular location is the nucleus inner membrane. The protein resides in the nucleus envelope. It localises to the cytoplasm. It is found in the cytoskeleton. The protein localises to the spindle. Functionally, nuclear lamina-associated inner nuclear membrane protein that is involved in nuclear structure organization, maintenance of nuclear envelope (NE) integrity and NE reformation after mitosis. Plays a role as transmembrane adapter for the endosomal sorting complexes required for transport (ESCRT), and is thereby involved in ESCRT-mediated NE reformation. Promotes ESCRT-mediated NE closure by recruiting CHMP7 and downstream ESCRT-III proteins IST1/CHMP8 and CHMP2A to the reforming NE during anaphase. During nuclear reassembly, condenses into a liquid-like coating around microtubule spindles and coassembles with CHMP7 to form a macromolecular O-ring seal at the confluence between membranes, chromatin, and the spindle to facilitate early nuclear sealing. Plays a role in the organization of heterochromatin associated with the NE and in the maintenance of NE organization under mechanical stress. Required for embryonic development and involved in regulation of several signaling pathways such as MAPK and AKT. Required for myoblast differentiation involving regulation of ERK signaling. Essential for cardiac homeostasis and proper heart function. The polypeptide is LEM domain-containing protein 2 (LEMD2) (Homo sapiens (Human)).